The chain runs to 120 residues: Large ribosomal subunit protein bL12 (120 aa).

Belongs to the bacterial ribosomal protein bL12 family. As to quaternary structure, homodimer. Part of the ribosomal stalk of the 50S ribosomal subunit. Forms a multimeric L10(L12)X complex, where L10 forms an elongated spine to which 2 to 4 L12 dimers bind in a sequential fashion. Binds GTP-bound translation factors.

Functionally, forms part of the ribosomal stalk which helps the ribosome interact with GTP-bound translation factors. Is thus essential for accurate translation. The polypeptide is Large ribosomal subunit protein bL12 (Pseudoalteromonas translucida (strain TAC 125)).